The following is a 702-amino-acid chain: Elongation factor G (702 aa).

Positions 8-290 (SRYRNIGISA…AIIEFLPAPN (283 aa)) constitute a tr-type G domain. GTP contacts are provided by residues 17–24 (AHIDAGKT), 88–92 (DTPGH), and 142–145 (NKMD).

The protein belongs to the TRAFAC class translation factor GTPase superfamily. Classic translation factor GTPase family. EF-G/EF-2 subfamily.

The protein resides in the cytoplasm. Its function is as follows. Catalyzes the GTP-dependent ribosomal translocation step during translation elongation. During this step, the ribosome changes from the pre-translocational (PRE) to the post-translocational (POST) state as the newly formed A-site-bound peptidyl-tRNA and P-site-bound deacylated tRNA move to the P and E sites, respectively. Catalyzes the coordinated movement of the two tRNA molecules, the mRNA and conformational changes in the ribosome. This Buchnera aphidicola subsp. Acyrthosiphon pisum (strain 5A) protein is Elongation factor G.